We begin with the raw amino-acid sequence, 366 residues long: Putative agmatine deiminase (366 aa).

The active-site Amidino-cysteine intermediate is Cys357.

It belongs to the agmatine deiminase family.

It carries out the reaction agmatine + H2O = N-carbamoylputrescine + NH4(+). This chain is Putative agmatine deiminase, found in Lactococcus lactis subsp. lactis (strain IL1403) (Streptococcus lactis).